A 126-amino-acid chain; its full sequence is Holo-[acyl-carrier-protein] synthase (126 aa).

Asp-8 and Glu-60 together coordinate Mg(2+).

It belongs to the P-Pant transferase superfamily. AcpS family. Mg(2+) serves as cofactor.

Its subcellular location is the cytoplasm. It carries out the reaction apo-[ACP] + CoA = holo-[ACP] + adenosine 3',5'-bisphosphate + H(+). Transfers the 4'-phosphopantetheine moiety from coenzyme A to a Ser of acyl-carrier-protein. This chain is Holo-[acyl-carrier-protein] synthase, found in Ehrlichia canis (strain Jake).